An 82-amino-acid polypeptide reads, in one-letter code: Small ribosomal subunit protein bS16 (82 aa).

It belongs to the bacterial ribosomal protein bS16 family.

The polypeptide is Small ribosomal subunit protein bS16 (Tolumonas auensis (strain DSM 9187 / NBRC 110442 / TA 4)).